The following is an 893-amino-acid chain: POU domain protein 2, isoform B (893 aa).

The disordered stretch occupies residues 586–668 (QMKQQQREDP…STPKPTSGLT (83 aa)). A compositionally biased stretch (low complexity) spans 602 to 617 (PLAKSPLRSPSLSPVP). Polar residues predominate over residues 623-646 (QQRTPPNSMTANSLGMSSAVMTPN). Low complexity predominate over residues 647–665 (TPSMQQQPQLQQSTPKPTS). In terms of domain architecture, POU-specific spans 681 to 755 (EETTDLEELE…LLQKWLEDAD (75 aa)). Positions 786–845 (RRKKRTSIETTVRTTLEKAFLMNCKPTSEEISQLSERLNMDKEVIRVWFCNRRQKEKRIN) form a DNA-binding region, homeobox.

This sequence belongs to the POU transcription factor family. Class-2 subfamily. As to expression, initial expression in cellular blastoderm stage, then in ectodermal stripes during germband extension. Broad expression in the neuroectoderm followed by limitation to discrete subsets of CNS cells, and expression in specific PNS neurons and support cells.

It is found in the nucleus. In terms of biological role, DNA-binding regulatory protein implicated in early development. Involved in neuronal cell fate decision. May act as an octamer-dependent activator of transcription. Could also play an early role in specific ectodermal cells, and a subsequent role in the embryonic nervous system. The sequence is that of POU domain protein 2, isoform B from Drosophila melanogaster (Fruit fly).